Consider the following 517-residue polypeptide: DNA primase DnaG (517 aa).

The Toprim domain maps to 171–257 (DAIIILEGRA…CVEDLVQKEV (87 aa)). Mg(2+) is bound by residues Glu177, Asp219, and Asp221.

Belongs to the archaeal DnaG primase family. Forms a ternary complex with MCM helicase and DNA. Component of the archaeal exosome complex. Mg(2+) serves as cofactor.

The enzyme catalyses ssDNA + n NTP = ssDNA/pppN(pN)n-1 hybrid + (n-1) diphosphate.. In terms of biological role, RNA polymerase that catalyzes the synthesis of short RNA molecules used as primers for DNA polymerase during DNA replication. Also part of the exosome, which is a complex involved in RNA degradation. Acts as a poly(A)-binding protein that enhances the interaction between heteromeric, adenine-rich transcripts and the exosome. The sequence is that of DNA primase DnaG from Methanosarcina barkeri (strain Fusaro / DSM 804).